A 238-amino-acid chain; its full sequence is MQYSPNLAHGTLLRRYKRFLADVLLDDGTEITLHCPNTGSMKNCLFPGETVWFSTSNNPKRKYAHTWEQSSTPDKQLIGINTGRANALAEEAINLGVIKELTGYDRLQREVKYGEENSRIDILLSSDTRASCYIEVKSCTLLEEGSTSGRGYFPDSVTVRGQKHLRELIHMVKQGHRAVLLFVVQHSGINSVSPARHIDVAYSELFTQALDAGVEVLAYQTQMSPQESQILTSCPVIT.

It belongs to the SfsA family.

The protein is Sugar fermentation stimulation protein homolog of Shewanella denitrificans (strain OS217 / ATCC BAA-1090 / DSM 15013).